The sequence spans 160 residues: Ribosomal RNA large subunit methyltransferase H (160 aa).

S-adenosyl-L-methionine contacts are provided by residues Leu-76, Gly-108, and Phe-127–Trp-132.

Belongs to the RNA methyltransferase RlmH family. Homodimer.

It localises to the cytoplasm. The catalysed reaction is pseudouridine(1915) in 23S rRNA + S-adenosyl-L-methionine = N(3)-methylpseudouridine(1915) in 23S rRNA + S-adenosyl-L-homocysteine + H(+). Its function is as follows. Specifically methylates the pseudouridine at position 1915 (m3Psi1915) in 23S rRNA. This chain is Ribosomal RNA large subunit methyltransferase H, found in Mesorhizobium japonicum (strain LMG 29417 / CECT 9101 / MAFF 303099) (Mesorhizobium loti (strain MAFF 303099)).